We begin with the raw amino-acid sequence, 509 residues long: Bifunctional purine biosynthesis protein PurH (509 aa).

The region spanning 1–144 (MKRALISVSD…KNYAAVTVVV (144 aa)) is the MGS-like domain.

Belongs to the PurH family.

It catalyses the reaction (6R)-10-formyltetrahydrofolate + 5-amino-1-(5-phospho-beta-D-ribosyl)imidazole-4-carboxamide = 5-formamido-1-(5-phospho-D-ribosyl)imidazole-4-carboxamide + (6S)-5,6,7,8-tetrahydrofolate. The catalysed reaction is IMP + H2O = 5-formamido-1-(5-phospho-D-ribosyl)imidazole-4-carboxamide. It participates in purine metabolism; IMP biosynthesis via de novo pathway; 5-formamido-1-(5-phospho-D-ribosyl)imidazole-4-carboxamide from 5-amino-1-(5-phospho-D-ribosyl)imidazole-4-carboxamide (10-formyl THF route): step 1/1. Its pathway is purine metabolism; IMP biosynthesis via de novo pathway; IMP from 5-formamido-1-(5-phospho-D-ribosyl)imidazole-4-carboxamide: step 1/1. The chain is Bifunctional purine biosynthesis protein PurH from Listeria welshimeri serovar 6b (strain ATCC 35897 / DSM 20650 / CCUG 15529 / CIP 8149 / NCTC 11857 / SLCC 5334 / V8).